Consider the following 85-residue polypeptide: Large ribosomal subunit protein bL27 (85 aa).

The segment at 1–22 is disordered; sequence MAHKKAGGSSRNGRDSESKRLG.

The protein belongs to the bacterial ribosomal protein bL27 family.

This is Large ribosomal subunit protein bL27 from Tolumonas auensis (strain DSM 9187 / NBRC 110442 / TA 4).